The chain runs to 106 residues: Nucleoid-associated protein DP1429 (106 aa).

This sequence belongs to the YbaB/EbfC family. In terms of assembly, homodimer.

The protein localises to the cytoplasm. It localises to the nucleoid. In terms of biological role, binds to DNA and alters its conformation. May be involved in regulation of gene expression, nucleoid organization and DNA protection. The chain is Nucleoid-associated protein DP1429 from Desulfotalea psychrophila (strain LSv54 / DSM 12343).